Reading from the N-terminus, the 112-residue chain is MSGKTVTRADLAESVFRKVGLSRTESAELVETVIDEICNAIVRGESVKLSSFATFQVRDKNERIGRNPKTGEEVPISPRRVMTFKASNVLKQRVLKAHLSRKSKLKPSNPAG.

Belongs to the bacterial histone-like protein family. In terms of assembly, heterodimer of an alpha and a beta chain.

This protein is one of the two subunits of integration host factor, a specific DNA-binding protein that functions in genetic recombination as well as in transcriptional and translational control. The protein is Integration host factor subunit alpha of Sinorhizobium medicae (strain WSM419) (Ensifer medicae).